The primary structure comprises 351 residues: Nicotinate-nucleotide--dimethylbenzimidazole phosphoribosyltransferase (351 aa).

Glu317 acts as the Proton acceptor in catalysis.

It belongs to the CobT family.

The enzyme catalyses 5,6-dimethylbenzimidazole + nicotinate beta-D-ribonucleotide = alpha-ribazole 5'-phosphate + nicotinate + H(+). It participates in nucleoside biosynthesis; alpha-ribazole biosynthesis; alpha-ribazole from 5,6-dimethylbenzimidazole: step 1/2. Its function is as follows. Catalyzes the synthesis of alpha-ribazole-5'-phosphate from nicotinate mononucleotide (NAMN) and 5,6-dimethylbenzimidazole (DMB). In Pseudomonas aeruginosa (strain ATCC 15692 / DSM 22644 / CIP 104116 / JCM 14847 / LMG 12228 / 1C / PRS 101 / PAO1), this protein is Nicotinate-nucleotide--dimethylbenzimidazole phosphoribosyltransferase.